We begin with the raw amino-acid sequence, 366 residues long: tRNA 2-selenouridine synthase (366 aa).

The 125-residue stretch at 12-136 (FLSGTPMMDV…MRGFLIDVIE (125 aa)) folds into the Rhodanese domain. The active-site S-selanylcysteine intermediate is the C95.

Belongs to the SelU family. As to quaternary structure, monomer.

It carries out the reaction 5-methylaminomethyl-2-thiouridine(34) in tRNA + selenophosphate + (2E)-geranyl diphosphate + H2O + H(+) = 5-methylaminomethyl-2-selenouridine(34) in tRNA + (2E)-thiogeraniol + phosphate + diphosphate. The catalysed reaction is 5-methylaminomethyl-2-thiouridine(34) in tRNA + (2E)-geranyl diphosphate = 5-methylaminomethyl-S-(2E)-geranyl-thiouridine(34) in tRNA + diphosphate. The enzyme catalyses 5-methylaminomethyl-S-(2E)-geranyl-thiouridine(34) in tRNA + selenophosphate + H(+) = 5-methylaminomethyl-2-(Se-phospho)selenouridine(34) in tRNA + (2E)-thiogeraniol. It catalyses the reaction 5-methylaminomethyl-2-(Se-phospho)selenouridine(34) in tRNA + H2O = 5-methylaminomethyl-2-selenouridine(34) in tRNA + phosphate. In terms of biological role, involved in the post-transcriptional modification of the uridine at the wobble position (U34) of tRNA(Lys), tRNA(Glu) and tRNA(Gln). Catalyzes the conversion of 2-thiouridine (S2U-RNA) to 2-selenouridine (Se2U-RNA). Acts in a two-step process involving geranylation of 2-thiouridine (S2U) to S-geranyl-2-thiouridine (geS2U) and subsequent selenation of the latter derivative to 2-selenouridine (Se2U) in the tRNA chain. The sequence is that of tRNA 2-selenouridine synthase from Cupriavidus pinatubonensis (strain JMP 134 / LMG 1197) (Cupriavidus necator (strain JMP 134)).